Reading from the N-terminus, the 98-residue chain is Small ribosomal subunit protein bS20 (98 aa).

The protein belongs to the bacterial ribosomal protein bS20 family.

Binds directly to 16S ribosomal RNA. The sequence is that of Small ribosomal subunit protein bS20 from Kosmotoga olearia (strain ATCC BAA-1733 / DSM 21960 / TBF 19.5.1).